The sequence spans 194 residues: Large ribosomal subunit protein uL6m (194 aa).

It belongs to the universal ribosomal protein uL6 family.

It is found in the mitochondrion. The protein is Large ribosomal subunit protein uL6m (RPL6) of Prototheca wickerhamii.